The following is a 150-amino-acid chain: Large ribosomal subunit protein uL15 (150 aa).

The tract at residues 12 to 43 (AKKRKKRVGCGESSGHGKTSGRGHKGQKARAG) is disordered. Residues 30 to 39 (TSGRGHKGQK) show a composition bias toward basic residues.

Belongs to the universal ribosomal protein uL15 family. Part of the 50S ribosomal subunit.

Binds to the 23S rRNA. This chain is Large ribosomal subunit protein uL15, found in Methylacidiphilum infernorum (isolate V4) (Methylokorus infernorum (strain V4)).